The primary structure comprises 419 residues: UDP-N-acetylglucosamine 1-carboxyvinyltransferase 2 (419 aa).

A phosphoenolpyruvate-binding site is contributed by 24–25 (KN). R94 is a UDP-N-acetyl-alpha-D-glucosamine binding site. The active-site Proton donor is C118. C118 carries the 2-(S-cysteinyl)pyruvic acid O-phosphothioketal modification. UDP-N-acetyl-alpha-D-glucosamine contacts are provided by residues 123–127 (RPIDQ), D307, and I329.

It belongs to the EPSP synthase family. MurA subfamily.

Its subcellular location is the cytoplasm. It carries out the reaction phosphoenolpyruvate + UDP-N-acetyl-alpha-D-glucosamine = UDP-N-acetyl-3-O-(1-carboxyvinyl)-alpha-D-glucosamine + phosphate. It participates in cell wall biogenesis; peptidoglycan biosynthesis. Functionally, cell wall formation. Adds enolpyruvyl to UDP-N-acetylglucosamine. In Staphylococcus aureus (strain MRSA252), this protein is UDP-N-acetylglucosamine 1-carboxyvinyltransferase 2.